The following is a 172-amino-acid chain: Early nodulin-like protein 17 (172 aa).

The N-terminal stretch at 1-26 (MARFTVLITAVVLAFLMAAPMPGVTA) is a signal peptide. Residues 27 to 127 (KKYTVGENKF…GMKLSVKVEK (101 aa)) form the Phytocyanin domain. Asn-42, Asn-73, Asn-88, and Asn-101 each carry an N-linked (GlcNAc...) asparagine glycan. A disulfide bridge connects residues Cys-80 and Cys-115. Gly-141 is lipidated: GPI-anchor amidated glycine. Positions 142–172 (SVSMVTGLAQFMIPVSLFAFPAMWDVISRMW) are cleaved as a propeptide — removed in mature form.

The protein belongs to the early nodulin-like (ENODL) family.

It is found in the cell membrane. May act as a carbohydrate transporter. The polypeptide is Early nodulin-like protein 17 (Arabidopsis thaliana (Mouse-ear cress)).